Reading from the N-terminus, the 481-residue chain is MSVFARATSLFSRAARTRAADEAARSRSRWVTLVFLAVLQLLIAVDVTVVNIALPAIRDSFHVDTRQLTWVVTGYTVVGGGLLMVGGRIADLFGRRRTLLFGAFLFGASSLAAGLAPNLELLVLARFGQGAGEALSLPAAMSLIACSSRTAPFQGVERLASVASVGLVLGFLLSGVITQLFSWRWIFLINIPLVSLVLVAVLLLVKKDETTARNPVDLPGALLFTAAPLLLIFGVNELGEDEPRLPLAVGSLLAAAVCAAAFVAVERRTAHPLVPLTFFGNRVRLVANGATVLLSAALSTSFFLLTMHLQEERDLSPIEAGLSFLPLGLSLILACVLVRGLIERIGTTGAAVLGMALAGPRHRLFALLPSDNSLLTSVFPGMILLLRMATGLVALQNAALHAVTEADAGVASGVQRCADQLGGASGIAVYVSIGFSPHLGGDWDPFTVAYSLAGIGLIAAVLAVLALSPDRRLAAPREQED.

Transmembrane regions (helical) follow at residues 30 to 50 (WVTLVFLAVLQLLIAVDVTVV), 67 to 87 (QLTWVVTGYTVVGGGLLMVGG), 99 to 119 (LLFGAFLFGASSLAAGLAPNL), 127 to 147 (FGQGAGEALSLPAAMSLIACS), 162 to 182 (VASVGLVLGFLLSGVITQLFS), 185 to 205 (WIFLINIPLVSLVLVAVLLLV), 215 to 235 (PVDLPGALLFTAAPLLLIFGV), 245 to 265 (LPLAVGSLLAAAVCAAAFVAV), 285 to 305 (LVANGATVLLSAALSTSFFLL), 318 to 338 (IEAGLSFLPLGLSLILACVLV), 340 to 360 (GLIERIGTTGAAVLGMALAGP), 374 to 394 (LLTSVFPGMILLLRMATGLVA), 421 to 441 (LGGASGIAVYVSIGFSPHLGG), and 446 to 466 (FTVAYSLAGIGLIAAVLAVLA).

The protein belongs to the major facilitator superfamily. TCR/Tet family.

Its subcellular location is the cell membrane. Its function is as follows. Proton-dependent transporter. May mediate the efflux of lincomycin. This is Lincomycin resistance protein (lmrA) from Streptomyces lincolnensis.